Consider the following 642-residue polypeptide: Fimbrin (642 aa).

2 EF-hand domains span residues 16 to 50 and 51 to 86; these read EDLFSTIEKFRAIDLDDKGWVEKQQALEAVSKDGD and ATYDEARETLKHVGVDASGRVELDDYVGLVAKLRES. 7 residues coordinate Ca(2+): Asp29, Asp31, Trp35, Asp66, Ser68, Arg70, and Asp75. Actin-binding stretches follow at residues 125-394 and 395-642; these read IVAG…GLEP and IQEE…TLNK. Calponin-homology (CH) domains follow at residues 139–259, 287–390, 411–521, and 534–642; these read EEER…RRGL, LPPE…NTHP, EREA…RRNI, and DMSD…TLNK.

Its function is as follows. Binds to actin, and functionally associates with actin structures involved in the development and maintenance of cell polarity. This is Fimbrin (SAC6) from Saccharomyces cerevisiae (strain ATCC 204508 / S288c) (Baker's yeast).